We begin with the raw amino-acid sequence, 311 residues long: Delta(1)-pyrroline-2-carboxylate reductase 2 (311 aa).

The protein belongs to the ornithine cyclodeaminase/mu-crystallin family.

The enzyme catalyses L-proline + NAD(+) = 1-pyrroline-2-carboxylate + NADH + H(+). It catalyses the reaction L-proline + NADP(+) = 1-pyrroline-2-carboxylate + NADPH + H(+). Functionally, catalyzes the reduction of Delta(1)-pyrroline-2-carboxylate (Pyr2C) to L-proline, using preferentially NADPH over NADH as the electron donor. May be involved in a degradation pathway that converts trans-3-hydroxy-L-proline (t3LHyp) to L-proline. The protein is Delta(1)-pyrroline-2-carboxylate reductase 2 of Burkholderia ambifaria (strain ATCC BAA-244 / DSM 16087 / CCUG 44356 / LMG 19182 / AMMD) (Burkholderia cepacia (strain AMMD)).